Consider the following 252-residue polypeptide: Large ribosomal subunit protein uL4 (252 aa).

Belongs to the universal ribosomal protein uL4 family. As to quaternary structure, part of the 50S ribosomal subunit.

Its function is as follows. One of the primary rRNA binding proteins, this protein initially binds near the 5'-end of the 23S rRNA. It is important during the early stages of 50S assembly. It makes multiple contacts with different domains of the 23S rRNA in the assembled 50S subunit and ribosome. Forms part of the polypeptide exit tunnel. This Archaeoglobus fulgidus (strain ATCC 49558 / DSM 4304 / JCM 9628 / NBRC 100126 / VC-16) protein is Large ribosomal subunit protein uL4.